Here is a 284-residue protein sequence, read N- to C-terminus: Nucleotide-binding protein Shewmr4_0670 (284 aa).

Position 8-15 (8-15 (GRSGSGKS)) interacts with ATP. Residue 56 to 59 (DVRN) participates in GTP binding.

Belongs to the RapZ-like family.

Functionally, displays ATPase and GTPase activities. The chain is Nucleotide-binding protein Shewmr4_0670 from Shewanella sp. (strain MR-4).